The following is a 651-amino-acid chain: Probable potassium transport system protein Kup (651 aa).

Over residues 1-16 (MRDSPGSKSSSERWHD) the composition is skewed to basic and acidic residues. Residues 1–31 (MRDSPGSKSSSERWHDTMAVSDPTAEGKDES) are disordered. The next 12 helical transmembrane spans lie at 38–58 (FWAL…TSPL), 74–94 (VTPA…FIVV), 129–149 (LLLL…SMIT), 168–188 (LQDY…AVQS), 197–217 (AFAP…VLHI), 232–252 (AIHF…LVFL), 276–296 (WFCL…ALIL), 309–329 (LAPA…TVIA), 366–386 (IYLP…VLLF), 396–416 (YGIA…VVVW), 423–443 (PAAA…FFSA), and 448–468 (LFDG…LIWT).

It belongs to the HAK/KUP transporter (TC 2.A.72) family.

It localises to the cell inner membrane. The enzyme catalyses K(+)(in) + H(+)(in) = K(+)(out) + H(+)(out). Its function is as follows. Transport of potassium into the cell. Likely operates as a K(+):H(+) symporter. The chain is Probable potassium transport system protein Kup from Nitrobacter winogradskyi (strain ATCC 25391 / DSM 10237 / CIP 104748 / NCIMB 11846 / Nb-255).